Consider the following 220-residue polypeptide: Cell division protein SepF (220 aa).

The tract at residues 1-120 is disordered; the sequence is MAIKDAFNKM…RREQYQHAAH (120 aa). Residues 26–35 show a composition bias toward basic and acidic residues; that stretch reads LSSKKQEEPV. Over residues 39 to 79 the composition is skewed to low complexity; the sequence is QQTSRPNQQQQAARASQPQQPKQARPQMQAQQRPQSQSRAA. Positions 93-102 are enriched in basic and acidic residues; the sequence is VSHDYNDRRA.

It belongs to the SepF family. Homodimer. Interacts with FtsZ.

It is found in the cytoplasm. Cell division protein that is part of the divisome complex and is recruited early to the Z-ring. Probably stimulates Z-ring formation, perhaps through the cross-linking of FtsZ protofilaments. Its function overlaps with FtsA. This Streptococcus equi subsp. equi (strain 4047) protein is Cell division protein SepF.